The chain runs to 270 residues: UPF0162 protein VC_2176 (270 aa).

The protein belongs to the UPF0162 family.

This Vibrio cholerae serotype O1 (strain ATCC 39315 / El Tor Inaba N16961) protein is UPF0162 protein VC_2176.